The following is a 550-amino-acid chain: Dihydroxy-acid dehydratase (550 aa).

Asp78 contacts Mg(2+). Cys119 provides a ligand contact to [2Fe-2S] cluster. Residues Asp120 and Lys121 each coordinate Mg(2+). Position 121 is an N6-carboxylysine (Lys121). Cys191 contacts [2Fe-2S] cluster. Glu440 serves as a coordination point for Mg(2+). Catalysis depends on Ser466, which acts as the Proton acceptor.

It belongs to the IlvD/Edd family. Homodimer. It depends on [2Fe-2S] cluster as a cofactor. Mg(2+) serves as cofactor.

The catalysed reaction is (2R)-2,3-dihydroxy-3-methylbutanoate = 3-methyl-2-oxobutanoate + H2O. The enzyme catalyses (2R,3R)-2,3-dihydroxy-3-methylpentanoate = (S)-3-methyl-2-oxopentanoate + H2O. It participates in amino-acid biosynthesis; L-isoleucine biosynthesis; L-isoleucine from 2-oxobutanoate: step 3/4. The protein operates within amino-acid biosynthesis; L-valine biosynthesis; L-valine from pyruvate: step 3/4. Functions in the biosynthesis of branched-chain amino acids. Catalyzes the dehydration of (2R,3R)-2,3-dihydroxy-3-methylpentanoate (2,3-dihydroxy-3-methylvalerate) into 2-oxo-3-methylpentanoate (2-oxo-3-methylvalerate) and of (2R)-2,3-dihydroxy-3-methylbutanoate (2,3-dihydroxyisovalerate) into 2-oxo-3-methylbutanoate (2-oxoisovalerate), the penultimate precursor to L-isoleucine and L-valine, respectively. The protein is Dihydroxy-acid dehydratase of Methanococcus vannielii (strain ATCC 35089 / DSM 1224 / JCM 13029 / OCM 148 / SB).